A 172-amino-acid polypeptide reads, in one-letter code: Small ribosomal subunit protein uS5 (172 aa).

Residues 17-80 form the S5 DRBM domain; that stretch reads LREKMISVNR…EQARRNMFKV (64 aa).

It belongs to the universal ribosomal protein uS5 family. In terms of assembly, part of the 30S ribosomal subunit. Contacts proteins S4 and S8.

In terms of biological role, with S4 and S12 plays an important role in translational accuracy. Located at the back of the 30S subunit body where it stabilizes the conformation of the head with respect to the body. The sequence is that of Small ribosomal subunit protein uS5 from Burkholderia orbicola (strain AU 1054).